The sequence spans 456 residues: GTP cyclohydrolase 1 (456 aa).

Zn(2+) is bound by residues cysteine 340, histidine 343, and cysteine 412.

The protein belongs to the GTP cyclohydrolase I family. Homodimer. As to expression, expressed in leaves and unripe fruits.

It carries out the reaction GTP + H2O = 7,8-dihydroneopterin 3'-triphosphate + formate + H(+). It functions in the pathway cofactor biosynthesis; 7,8-dihydroneopterin triphosphate biosynthesis; 7,8-dihydroneopterin triphosphate from GTP: step 1/1. Its function is as follows. GTP cyclohydrolase 1 is the first enzyme in the biosynthetic pathway leading to folic acid. The protein is GTP cyclohydrolase 1 (GCH1) of Solanum lycopersicum (Tomato).